Reading from the N-terminus, the 568-residue chain is Light-independent protochlorophyllide reductase subunit B (568 aa).

Asp36 provides a ligand contact to [4Fe-4S] cluster. The active-site Proton donor is Asp293. Position 437–438 (437–438) interacts with substrate; sequence GM. The disordered stretch occupies residues 476–517; sequence ANGHPEAGVSVGAAEPSAAPSRSVVTEESNRATTPSSSTVHP. Positions 498 to 515 are enriched in polar residues; the sequence is SVVTEESNRATTPSSSTV.

This sequence belongs to the ChlB/BchB/BchZ family. As to quaternary structure, protochlorophyllide reductase is composed of three subunits; BchL, BchN and BchB. Forms a heterotetramer of two BchB and two BchN subunits. It depends on [4Fe-4S] cluster as a cofactor.

It catalyses the reaction chlorophyllide a + oxidized 2[4Fe-4S]-[ferredoxin] + 2 ADP + 2 phosphate = protochlorophyllide a + reduced 2[4Fe-4S]-[ferredoxin] + 2 ATP + 2 H2O. The protein operates within porphyrin-containing compound metabolism; bacteriochlorophyll biosynthesis (light-independent). In terms of biological role, component of the dark-operative protochlorophyllide reductase (DPOR) that uses Mg-ATP and reduced ferredoxin to reduce ring D of protochlorophyllide (Pchlide) to form chlorophyllide a (Chlide). This reaction is light-independent. The NB-protein (BchN-BchB) is the catalytic component of the complex. This Roseiflexus sp. (strain RS-1) protein is Light-independent protochlorophyllide reductase subunit B.